The chain runs to 1087 residues: A-kinase anchor protein 9 (1087 aa).

A coiled-coil region spans residues 5 to 461 (EVQCQAEKVR…REREKMERIQ (457 aa)). Residues 559-572 (SLQKVLEEKVAAAL) are PKA-RII subunit binding domain. A coiled-coil region spans residues 614–773 (MESDVSALTW…SEKEDKTEVQ (160 aa)). The segment covering 667–685 (VQDSETKQRERERQSRLHG) has biased composition (basic and acidic residues). The segment at 667-691 (VQDSETKQRERERQSRLHGDLGVLE) is disordered.

Interacts with the regulatory region of protein kinase N (PKN), protein phosphatase 2A (PP2A), protein phosphatase 1 (PP1) and the immature non-phosphorylated form of PKC epsilon. Interacts with CIP4 and FNBP1. Interacts with chloride intracellular channel proteins CLIC1, CLIC4 and CLIC5. CSNK1D binding promotes its centrosomal subcellular location. Interacts with GM130/GOLGA2; leading to recruitment to the Golgi apparatus. Interacts with KCNQ1; targets protein kinase A (PKA) catalytic and regulatory subunits and protein phosphatase 1 (PP1), to the heterodimer KCNQ1-KCNE1. Interacts with PDE4DIP; this interaction stabilizes both proteins. In complex with PDE4DIP, recruits CAMSAP2 to the Golgi apparatus. Forms a pericentrosomal complex with CDK5RAP2, EB1/MAPRE1 and PDE4DIP; within this complex, MAPRE1 binding to CDK5RAP2 may be mediated by PDE4DIP. The interaction with PDE4DIP is isoform-specific. Interacts with MAPRE1 and MAPRE3. Interacts (via C-terminus) with CAMSAP2; this interaction is much stronger in the presence of PDE4DIP. Interacts with CAMSAP3. Interacts (via C-terminus) with the gamma-tubulin ring complex (gamma-TuRC), composed of gamma-tubulin, TUBGCP2, TUBGCP3, TUBGCP4, TUBGCP5 and TUBGCP6. As to expression, highly expressed in gastric parietal cells.

It is found in the golgi apparatus. It localises to the cytoplasm. The protein localises to the cytoskeleton. The protein resides in the microtubule organizing center. Its subcellular location is the centrosome. In terms of biological role, scaffolding protein that assembles several protein kinases and phosphatases on the centrosome and Golgi apparatus. Required to maintain the integrity of the Golgi apparatus. Required for microtubule nucleation at the cis-side of the Golgi apparatus. Required for association of the centrosomes with the poles of the bipolar mitotic spindle during metaphase. In complex with PDE4DIP, recruits CAMSAP2 to the Golgi apparatus and tethers non-centrosomal minus-end microtubules to the Golgi, an important step for polarized cell movement. In complex with PDE4DIP, EB1/MAPRE1 and CDK5RAP2, contributes to microtubules nucleation and extension also from the centrosome to the cell periphery. The interaction with PDE4DIP is isoform-specific. This Oryctolagus cuniculus (Rabbit) protein is A-kinase anchor protein 9 (AKAP9).